Consider the following 882-residue polypeptide: HTH-type transcriptional regulator AlkS (882 aa).

ATP is bound at residue 51–58 (APPGYGKT). Residues 815-880 (ENKADALLTR…QATIEAERQG (66 aa)) enclose the HTH luxR-type domain. The segment at residues 839-858 (NKQIATNMHVTEDAIKWHMR) is a DNA-binding region (H-T-H motif).

Its pathway is hydrocarbon metabolism; alkane degradation. In terms of biological role, this protein activates the expression of alkBFGHJKL operon in the presence of alkanes. The protein is HTH-type transcriptional regulator AlkS (alkS) of Ectopseudomonas oleovorans (Pseudomonas oleovorans).